The primary structure comprises 186 residues: MISSNDFRTGTSIELDGSVWRVVEFLHVKPGKGSAFVRTKLKAVQSGNVVEKTFRAGEMLPQALLEKSTLQHTYMESGDYVFMDMSSYEETRLTAQQIGDSRKYLKEGMEVNVVSWNGNPLEVELPNSVVLEITETDPGVKGDTATGGTKPAILETGAQVMVPLFLSVGEKIKVDTRNDSYLGREN.

Belongs to the elongation factor P family.

It localises to the cytoplasm. Its pathway is protein biosynthesis; polypeptide chain elongation. Its function is as follows. Involved in peptide bond synthesis. Stimulates efficient translation and peptide-bond synthesis on native or reconstituted 70S ribosomes in vitro. Probably functions indirectly by altering the affinity of the ribosome for aminoacyl-tRNA, thus increasing their reactivity as acceptors for peptidyl transferase. This Prochlorococcus marinus (strain MIT 9313) protein is Elongation factor P.